Consider the following 286-residue polypeptide: Elongation factor Ts (286 aa).

An involved in Mg(2+) ion dislocation from EF-Tu region spans residues 82-85 (TDFV).

Belongs to the EF-Ts family.

It localises to the cytoplasm. Its function is as follows. Associates with the EF-Tu.GDP complex and induces the exchange of GDP to GTP. It remains bound to the aminoacyl-tRNA.EF-Tu.GTP complex up to the GTP hydrolysis stage on the ribosome. This Hamiltonella defensa subsp. Acyrthosiphon pisum (strain 5AT) protein is Elongation factor Ts.